A 287-amino-acid chain; its full sequence is RNA polymerase sigma factor RpoH (287 aa).

The sigma-70 factor domain-2 stretch occupies residues 54–123; sequence LILSHLRFVI…IHEYVLRNWR (70 aa). The Interaction with polymerase core subunit RpoC signature appears at 78-81; that stretch reads DLIQ. A sigma-70 factor domain-4 region spans residues 230–283; sequence ALSSLDERSRNIIHARWLDDSDHKMTLREIAHNYGISAERVRQLEKNAMKKLKV. The segment at residues 256 to 275 is a DNA-binding region (H-T-H motif); sequence LREIAHNYGISAERVRQLEK.

It belongs to the sigma-70 factor family. RpoH subfamily. Interacts with the RNA polymerase core enzyme.

The protein localises to the cytoplasm. Functionally, sigma factors are initiation factors that promote the attachment of RNA polymerase to specific initiation sites and are then released. This sigma factor is involved in regulation of expression of heat shock genes. This Buchnera aphidicola subsp. Baizongia pistaciae (strain Bp) protein is RNA polymerase sigma factor RpoH.